Consider the following 386-residue polypeptide: TRIBOA-glucoside O-methyltransferase BX7 (386 aa).

S-adenosyl-L-methionine-binding residues include Gly-224, Asp-248, Met-270, and Lys-283. His-287 (proton acceptor) is an active-site residue.

The protein belongs to the class I-like SAM-binding methyltransferase superfamily. Cation-independent O-methyltransferase family. COMT subfamily. In terms of tissue distribution, expressed in seedlings and newly formed crown roots. Highest expression in the scutellar node. Low to non detectable levels in cob, tassel and mature organs like husk or leaves.

It carries out the reaction TRIBOA beta-D-glucoside + S-adenosyl-L-methionine = DIMBOA beta-D-glucoside + S-adenosyl-L-homocysteine + H(+). In terms of biological role, O-methyltransferase involved in the benzoxazinoid glucoside biosynthesis. Can use 2,4,7-trihydroxy-2H-1,4-benzoxazin-3(4H)-one 2-D-glucoside (TRIBOA-glucoside) as substrate, but not aglucone TRIBOA, caffeic acid, ferulic acid, apigenin or quercetin. The sequence is that of TRIBOA-glucoside O-methyltransferase BX7 (BX7) from Zea mays (Maize).